The primary structure comprises 426 residues: Serine--tRNA ligase (426 aa).

T231–E233 is an L-serine binding site. ATP is bound at residue R262–E264. E285 contacts L-serine. E349–S352 contributes to the ATP binding site. Residue S385 coordinates L-serine.

It belongs to the class-II aminoacyl-tRNA synthetase family. Type-1 seryl-tRNA synthetase subfamily. Homodimer. The tRNA molecule binds across the dimer.

It localises to the cytoplasm. It catalyses the reaction tRNA(Ser) + L-serine + ATP = L-seryl-tRNA(Ser) + AMP + diphosphate + H(+). The enzyme catalyses tRNA(Sec) + L-serine + ATP = L-seryl-tRNA(Sec) + AMP + diphosphate + H(+). It functions in the pathway aminoacyl-tRNA biosynthesis; selenocysteinyl-tRNA(Sec) biosynthesis; L-seryl-tRNA(Sec) from L-serine and tRNA(Sec): step 1/1. In terms of biological role, catalyzes the attachment of serine to tRNA(Ser). Is also able to aminoacylate tRNA(Sec) with serine, to form the misacylated tRNA L-seryl-tRNA(Sec), which will be further converted into selenocysteinyl-tRNA(Sec). This is Serine--tRNA ligase from Myxococcus xanthus (strain DK1622).